The sequence spans 251 residues: 5'-nucleotidase SurE (251 aa).

A divalent metal cation-binding residues include Asp8, Asp9, Ser39, and Asn95.

This sequence belongs to the SurE nucleotidase family. Requires a divalent metal cation as cofactor.

Its subcellular location is the cytoplasm. The catalysed reaction is a ribonucleoside 5'-phosphate + H2O = a ribonucleoside + phosphate. Functionally, nucleotidase that shows phosphatase activity on nucleoside 5'-monophosphates. The protein is 5'-nucleotidase SurE of Clostridium botulinum (strain Alaska E43 / Type E3).